The sequence spans 339 residues: Undecaprenyl-phosphate 4-deoxy-4-formamido-L-arabinose transferase (339 aa).

The next 2 helical transmembrane spans lie at 235 to 255 (LSLV…FLLV) and 269 to 289 (LFVL…GMGL).

Belongs to the glycosyltransferase 2 family.

It is found in the cell inner membrane. It carries out the reaction UDP-4-deoxy-4-formamido-beta-L-arabinose + di-trans,octa-cis-undecaprenyl phosphate = 4-deoxy-4-formamido-alpha-L-arabinopyranosyl di-trans,octa-cis-undecaprenyl phosphate + UDP. The protein operates within glycolipid biosynthesis; 4-amino-4-deoxy-alpha-L-arabinose undecaprenyl phosphate biosynthesis; 4-amino-4-deoxy-alpha-L-arabinose undecaprenyl phosphate from UDP-4-deoxy-4-formamido-beta-L-arabinose and undecaprenyl phosphate: step 1/2. Its pathway is bacterial outer membrane biogenesis; lipopolysaccharide biosynthesis. Catalyzes the transfer of 4-deoxy-4-formamido-L-arabinose from UDP to undecaprenyl phosphate. The modified arabinose is attached to lipid A and is required for resistance to polymyxin and cationic antimicrobial peptides. This is Undecaprenyl-phosphate 4-deoxy-4-formamido-L-arabinose transferase from Pseudomonas aeruginosa (strain LESB58).